A 255-amino-acid polypeptide reads, in one-letter code: Methylthioribulose-1-phosphate dehydratase (255 aa).

Residue Cys111 coordinates substrate. Zn(2+) is bound by residues His128 and His130. Residue Glu157 is the Proton donor/acceptor of the active site. Residue His213 participates in Zn(2+) binding.

Belongs to the aldolase class II family. MtnB subfamily. It depends on Zn(2+) as a cofactor.

The protein localises to the cytoplasm. The catalysed reaction is 5-(methylsulfanyl)-D-ribulose 1-phosphate = 5-methylsulfanyl-2,3-dioxopentyl phosphate + H2O. It participates in amino-acid biosynthesis; L-methionine biosynthesis via salvage pathway; L-methionine from S-methyl-5-thio-alpha-D-ribose 1-phosphate: step 2/6. Functionally, catalyzes the dehydration of methylthioribulose-1-phosphate (MTRu-1-P) into 2,3-diketo-5-methylthiopentyl-1-phosphate (DK-MTP-1-P). In Talaromyces stipitatus (strain ATCC 10500 / CBS 375.48 / QM 6759 / NRRL 1006) (Penicillium stipitatum), this protein is Methylthioribulose-1-phosphate dehydratase.